The chain runs to 881 residues: Lon protease (881 aa).

Over residues 1–24 (MAKNTDIEHDAHEPAGHGDVRESA) the composition is skewed to basic and acidic residues. The disordered stretch occupies residues 1–77 (MAKNTDIEHD…RAGEAEKGVP (77 aa)). Polar residues predominate over residues 49-59 (QTDTESAQGAA). Residues 65–77 (EVQRAGEAEKGVP) show a composition bias toward basic and acidic residues. One can recognise a Lon N-terminal domain in the interval 94–287 (VHLIPLTGRP…EVFVYIKKEK (194 aa)). 440–447 (GPPGVGKT) contributes to the ATP binding site. Positions 679 to 861 (ANKVGTAVGL…EEVLSLAFPK (183 aa)) constitute a Lon proteolytic domain. Active-site residues include Ser767 and Lys810.

The protein belongs to the peptidase S16 family. As to quaternary structure, homohexamer. Organized in a ring with a central cavity.

It localises to the cytoplasm. It carries out the reaction Hydrolysis of proteins in presence of ATP.. ATP-dependent serine protease that mediates the selective degradation of mutant and abnormal proteins as well as certain short-lived regulatory proteins. Required for cellular homeostasis and for survival from DNA damage and developmental changes induced by stress. Degrades polypeptides processively to yield small peptide fragments that are 5 to 10 amino acids long. Binds to DNA in a double-stranded, site-specific manner. The sequence is that of Lon protease from Treponema pallidum (strain Nichols).